A 50-amino-acid polypeptide reads, in one-letter code: Photosystem II reaction center protein M (50 aa).

Residues 7–27 (GFVASLLFVGVPTIFLIGLFI) form a helical membrane-spanning segment.

Belongs to the PsbM family. In terms of assembly, PSII is composed of 1 copy each of membrane proteins PsbA, PsbB, PsbC, PsbD, PsbE, PsbF, PsbH, PsbI, PsbJ, PsbK, PsbL, PsbM, PsbT, PsbX, PsbY, Psb30/Ycf12, peripheral proteins PsbO, CyanoQ (PsbQ), PsbU, PsbV and a large number of cofactors. It forms dimeric complexes.

The protein resides in the cellular thylakoid membrane. In terms of biological role, one of the components of the core complex of photosystem II (PSII). PSII is a light-driven water:plastoquinone oxidoreductase that uses light energy to abstract electrons from H(2)O, generating O(2) and a proton gradient subsequently used for ATP formation. It consists of a core antenna complex that captures photons, and an electron transfer chain that converts photonic excitation into a charge separation. This subunit is found at the monomer-monomer interface. The chain is Photosystem II reaction center protein M from Prochlorococcus marinus (strain MIT 9515).